Here is a 483-residue protein sequence, read N- to C-terminus: 2-methylcitrate dehydratase (483 aa).

This sequence belongs to the PrpD family. As to quaternary structure, monomer.

The catalysed reaction is (2S,3S)-2-methylcitrate = 2-methyl-cis-aconitate + H2O. The enzyme catalyses citrate = D-threo-isocitrate. It functions in the pathway organic acid metabolism; propanoate degradation. Its pathway is carbohydrate metabolism; tricarboxylic acid cycle; isocitrate from oxaloacetate: step 2/2. Functionally, involved in the catabolism of short chain fatty acids (SCFA) via the tricarboxylic acid (TCA)(acetyl degradation route) and via the 2-methylcitrate cycle I (propionate degradation route). Catalyzes the dehydration of 2-methylcitrate (2-MC) to yield the cis isomer of 2-methyl-aconitate. It is also able to catalyze the dehydration of citrate and the hydration of cis-aconitate at a lower rate. Due to its broad substrate specificity, it seems to be responsible for the residual aconitase activity of the acnAB-null mutant. The polypeptide is 2-methylcitrate dehydratase (Escherichia coli (strain K12)).